Here is a 315-residue protein sequence, read N- to C-terminus: ATP synthase gamma chain (315 aa).

It belongs to the ATPase gamma chain family. In terms of assembly, F-type ATPases have 2 components, CF(1) - the catalytic core - and CF(0) - the membrane proton channel. CF(1) has five subunits: alpha(3), beta(3), gamma(1), delta(1), epsilon(1). CF(0) has three main subunits: a, b and c.

Its subcellular location is the cell membrane. Produces ATP from ADP in the presence of a proton gradient across the membrane. The gamma chain is believed to be important in regulating ATPase activity and the flow of protons through the CF(0) complex. The chain is ATP synthase gamma chain from Latilactobacillus sakei subsp. sakei (strain 23K) (Lactobacillus sakei subsp. sakei).